A 424-amino-acid chain; its full sequence is CinA-like protein (424 aa).

The protein belongs to the CinA family.

This chain is CinA-like protein, found in Shewanella halifaxensis (strain HAW-EB4).